The chain runs to 397 residues: Trans-2-enoyl-CoA reductase [NADH] (397 aa).

NAD(+)-binding positions include 53-58 (GCSNGY), 79-80 (FE), 116-117 (DA), and 144-145 (LA). Position 230 (tyrosine 230) interacts with substrate. The active-site Proton donor is the tyrosine 240. NAD(+) is bound by residues lysine 249 and 276 to 278 (LVT).

This sequence belongs to the TER reductase family. As to quaternary structure, monomer.

The enzyme catalyses a 2,3-saturated acyl-CoA + NAD(+) = a (2E)-enoyl-CoA + NADH + H(+). It functions in the pathway lipid metabolism; fatty acid biosynthesis. With respect to regulation, inhibited by lauroyl-CoA. Its function is as follows. Involved in the fatty acid synthesis (FAS II). Catalyzes the reduction of the carbon-carbon double bond of crotonyl-CoA to yield butyryl-CoA. In vitro it can also use hexenoyl-CoA and dodecenoyl-CoA as substrates. The sequence is that of Trans-2-enoyl-CoA reductase [NADH] from Treponema denticola (strain ATCC 35405 / DSM 14222 / CIP 103919 / JCM 8153 / KCTC 15104).